A 338-amino-acid chain; its full sequence is Cytochrome bd ubiquinol oxidase subunit 2 (338 aa).

The next 9 helical transmembrane spans lie at 7-27 (LWFI…GFDF), 50-70 (IGPF…AIFA), 75-95 (WYAT…LALM), 119-139 (VVFF…TTLF), 163-183 (ILGG…FITL), 196-216 (MAQK…ALSA), 227-247 (EITI…AVFI), 256-276 (FGMT…SLFP), and 306-326 (IAAL…YYVF).

Belongs to the cytochrome ubiquinol oxidase subunit 2 family. Heterodimer of subunits I and II. It depends on heme b as a cofactor. Heme d cis-diol is required as a cofactor.

It localises to the cell membrane. It catalyses the reaction 2 a ubiquinol + O2(in) + 4 H(+)(in) = 2 a ubiquinone + 2 H2O(in) + 4 H(+)(out). The chain is Cytochrome bd ubiquinol oxidase subunit 2 (cydB) from Bacillus subtilis (strain 168).